We begin with the raw amino-acid sequence, 397 residues long: Elongation factor Tu (397 aa).

Positions K10–E206 constitute a tr-type G domain. The G1 stretch occupies residues G19–T26. G19–T26 contributes to the GTP binding site. T26 serves as a coordination point for Mg(2+). The interval G62–N66 is G2. A G3 region spans residues D83–G86. Residues D83–H87 and N138–D141 each bind GTP. The segment at N138–D141 is G4. Positions S176–L178 are G5.

This sequence belongs to the TRAFAC class translation factor GTPase superfamily. Classic translation factor GTPase family. EF-Tu/EF-1A subfamily. As to quaternary structure, monomer.

It localises to the cytoplasm. It carries out the reaction GTP + H2O = GDP + phosphate + H(+). Functionally, GTP hydrolase that promotes the GTP-dependent binding of aminoacyl-tRNA to the A-site of ribosomes during protein biosynthesis. This is Elongation factor Tu from Brevibacterium linens.